Consider the following 534-residue polypeptide: NAD(P)H-quinone oxidoreductase chain 4 (534 aa).

Helical transmembrane passes span 12–32 (FPWLSASILFPIGSALVIPFF), 44–64 (FALSIALITFLITVGSYINGF), 96–116 (MPLILLTSFITALAVLAAWPV), 120–140 (PKLFFFLILVMDGGQIAVFAV), 144–164 (LLFFLTWELELIPVYLLLAIW), 176–196 (FIIYTAGSSIFILLAALAMGF), 220–240 (ILCYVGLLIAFGVKLPIVPLH), 251–271 (TAPVHMLLAGILLKMGGYALL), 285–305 (FAPLLIVLGVVNIIYAALTSF), 314–334 (IAYSSISHMGFVLIGIGSFSS), 340–360 (AMLQMVSHGLIGASLFFLVGA), 384–404 (FALWTACSLASLALPGMSGFV), 425–445 (VVMASLAAIGVILTPIYLLSM), and 472–492 (VYIIACLLLPIIGIGLYPRLV).

It belongs to the complex I subunit 4 family.

It localises to the cellular thylakoid membrane. It catalyses the reaction a plastoquinone + NADH + (n+1) H(+)(in) = a plastoquinol + NAD(+) + n H(+)(out). The enzyme catalyses a plastoquinone + NADPH + (n+1) H(+)(in) = a plastoquinol + NADP(+) + n H(+)(out). Its function is as follows. NDH-1 shuttles electrons from NAD(P)H, via FMN and iron-sulfur (Fe-S) centers, to quinones in the respiratory chain. The immediate electron acceptor for the enzyme in this species is believed to be plastoquinone. Couples the redox reaction to proton translocation (for every two electrons transferred, four hydrogen ions are translocated across the cytoplasmic membrane), and thus conserves the redox energy in a proton gradient. The sequence is that of NAD(P)H-quinone oxidoreductase chain 4 from Prochlorococcus marinus (strain MIT 9215).